Reading from the N-terminus, the 132-residue chain is Small ribosomal subunit protein uS8 (132 aa).

This sequence belongs to the universal ribosomal protein uS8 family. As to quaternary structure, part of the 30S ribosomal subunit. Contacts proteins S5 and S12.

In terms of biological role, one of the primary rRNA binding proteins, it binds directly to 16S rRNA central domain where it helps coordinate assembly of the platform of the 30S subunit. The protein is Small ribosomal subunit protein uS8 of Renibacterium salmoninarum (strain ATCC 33209 / DSM 20767 / JCM 11484 / NBRC 15589 / NCIMB 2235).